The primary structure comprises 225 residues: tRNA (guanine-N(7)-)-methyltransferase (225 aa).

Residues E56, E81, D108, and D131 each contribute to the S-adenosyl-L-methionine site. Residue D131 is part of the active site. Residues K135, D167, and 204–207 (TKFE) each bind substrate.

This sequence belongs to the class I-like SAM-binding methyltransferase superfamily. TrmB family.

It carries out the reaction guanosine(46) in tRNA + S-adenosyl-L-methionine = N(7)-methylguanosine(46) in tRNA + S-adenosyl-L-homocysteine. It participates in tRNA modification; N(7)-methylguanine-tRNA biosynthesis. Functionally, catalyzes the formation of N(7)-methylguanine at position 46 (m7G46) in tRNA. The sequence is that of tRNA (guanine-N(7)-)-methyltransferase from Legionella pneumophila (strain Corby).